A 207-amino-acid polypeptide reads, in one-letter code: Outer-membrane lipoprotein LolB (207 aa).

Residues 1 to 21 (MTLPDFRLIRLLPLASLVLTA) form the signal peptide. C22 carries N-palmitoyl cysteine lipidation. A lipid anchor (S-diacylglycerol cysteine) is attached at C22.

It belongs to the LolB family. In terms of assembly, monomer.

The protein resides in the cell outer membrane. Its function is as follows. Plays a critical role in the incorporation of lipoproteins in the outer membrane after they are released by the LolA protein. This is Outer-membrane lipoprotein LolB from Salmonella typhi.